Here is a 699-residue protein sequence, read N- to C-terminus: tRNA 5-methylaminomethyl-2-thiouridine biosynthesis bifunctional protein MnmC (699 aa).

The tract at residues 1 to 247 is tRNA (mnm(5)s(2)U34)-methyltransferase; that stretch reads MPAVSRPLPP…KREMLCGEIA (247 aa). Positions 275-699 are FAD-dependent cmnm(5)s(2)U34 oxidoreductase; the sequence is IGAGLAGTSV…QPSPTTTETP (425 aa). The disordered stretch occupies residues 675–699; that stretch reads RGNATLSTSSPNDDAQPSPTTTETP.

In the N-terminal section; belongs to the methyltransferase superfamily. tRNA (mnm(5)s(2)U34)-methyltransferase family. This sequence in the C-terminal section; belongs to the DAO family. It depends on FAD as a cofactor.

The protein resides in the cytoplasm. It catalyses the reaction 5-aminomethyl-2-thiouridine(34) in tRNA + S-adenosyl-L-methionine = 5-methylaminomethyl-2-thiouridine(34) in tRNA + S-adenosyl-L-homocysteine + H(+). Functionally, catalyzes the last two steps in the biosynthesis of 5-methylaminomethyl-2-thiouridine (mnm(5)s(2)U) at the wobble position (U34) in tRNA. Catalyzes the FAD-dependent demodification of cmnm(5)s(2)U34 to nm(5)s(2)U34, followed by the transfer of a methyl group from S-adenosyl-L-methionine to nm(5)s(2)U34, to form mnm(5)s(2)U34. The polypeptide is tRNA 5-methylaminomethyl-2-thiouridine biosynthesis bifunctional protein MnmC (Chromohalobacter salexigens (strain ATCC BAA-138 / DSM 3043 / CIP 106854 / NCIMB 13768 / 1H11)).